The sequence spans 168 residues: Cell division inhibitor SulA (168 aa).

Positions 106–112 are ftsZ binding; it reads ALLTGNY. A lon protease binding region spans residues 161–168; the sequence is KIHSSLYH.

The protein belongs to the SulA family. Interacts with FtsZ. Post-translationally, is rapidly cleaved and degraded by the Lon protease once DNA damage is repaired.

In terms of biological role, component of the SOS system and an inhibitor of cell division. Accumulation of SulA causes rapid cessation of cell division and the appearance of long, non-septate filaments. In the presence of GTP, binds a polymerization-competent form of FtsZ in a 1:1 ratio, thus inhibiting FtsZ polymerization and therefore preventing it from participating in the assembly of the Z ring. This mechanism prevents the premature segregation of damaged DNA to daughter cells during cell division. The polypeptide is Cell division inhibitor SulA (Yersinia enterocolitica serotype O:8 / biotype 1B (strain NCTC 13174 / 8081)).